The following is a 427-amino-acid chain: MNYSRSELLFQEAQKAIPGGVNSPVRAFKSVGTDPLFIEKASGSRIYDVDGNEFIDYVGSWGPMILGHCHPQVVAAVKSAVDNGCSFGAPTELEITLAEMVIEAVPSIEMVRMVSSGTEATMSAIRLARGYTGRDKILKFSGCYHGHSDSLLVKAGSGAATFGVPDSPGVPQDFAKHTLTATYNDLESVNKLVAENKNQISCIIVEPVAGNMGTVPPREGFLEGLRSLCTEEGIVLIFDEVMSGFRVAYGGAQELYNVTPDMTTLGKIIGGGLPVGAFGGKKEIMSLLSPSGGVYQAGTLSGNPLAMTAGIETLKLLQTEGFYQDLDRKSDYVASGIAKAAKDAGFPIYSTRVGSMFCAFFSKKPVYDWTSAAACDTKAFAKYFRLMLDEGIYLAPSQFETAFVSIAHSTDDLDKTIAAAAKAFKSL.

Lys-267 is modified (N6-(pyridoxal phosphate)lysine).

The protein belongs to the class-III pyridoxal-phosphate-dependent aminotransferase family. HemL subfamily. As to quaternary structure, homodimer. The cofactor is pyridoxal 5'-phosphate.

Its subcellular location is the cytoplasm. It carries out the reaction (S)-4-amino-5-oxopentanoate = 5-aminolevulinate. The protein operates within porphyrin-containing compound metabolism; protoporphyrin-IX biosynthesis; 5-aminolevulinate from L-glutamyl-tRNA(Glu): step 2/2. This Geotalea uraniireducens (strain Rf4) (Geobacter uraniireducens) protein is Glutamate-1-semialdehyde 2,1-aminomutase.